Reading from the N-terminus, the 497-residue chain is Mechanosensitive ion channel protein 1, mitochondrial (497 aa).

Residues 1-86 constitute a mitochondrion transit peptide; that stretch reads MAGVRLSLLK…RAFSSKSDDF (86 aa). The next 5 membrane-spanning stretches (helical) occupy residues 152-172, 216-236, 238-258, 280-300, and 305-325; these read DVIV…VVMP, LVTF…TIAA, YFSP…LYRW, VLTL…MASA, and VAVQ…AFAA.

It belongs to the MscS (TC 1.A.23) family.

The protein resides in the mitochondrion membrane. Its function is as follows. Mechanosensitive channel that opens in response to stretch forces in the membrane lipid bilayer. The chain is Mechanosensitive ion channel protein 1, mitochondrial (MSL1) from Arabidopsis thaliana (Mouse-ear cress).